A 360-amino-acid polypeptide reads, in one-letter code: UPF0324 membrane protein DVU_0123 (360 aa).

A run of 10 helical transmembrane segments spans residues 20 to 42, 57 to 79, 100 to 122, 142 to 164, 171 to 193, 203 to 225, 232 to 254, 278 to 297, 310 to 327, and 337 to 359; these read VTESLPGLLLVCAVALVASFVAP, KDFILAIIFGIIIRNTVGVPAVF, SYSLAGLVSVGAQALVFIAVFLF, AACLAAGMSVCGVSATIAIAPAV, MAYSIAVVLMFGLLALIAFPLIG, FGAFAGVGIVNSAQVLAAGFGFS, AGIYNIGRVVFLPFVVLMLAIMA, FPLFVLGFLAIVCLNTAGVL, EWAFLLGFASIGLTTRLS, and FLFGFGVAGLKAALALAAVLLFM.

The protein belongs to the UPF0324 family.

Its subcellular location is the cell membrane. In Nitratidesulfovibrio vulgaris (strain ATCC 29579 / DSM 644 / CCUG 34227 / NCIMB 8303 / VKM B-1760 / Hildenborough) (Desulfovibrio vulgaris), this protein is UPF0324 membrane protein DVU_0123.